A 140-amino-acid polypeptide reads, in one-letter code: Large ribosomal subunit protein bL17 (140 aa).

It belongs to the bacterial ribosomal protein bL17 family. In terms of assembly, part of the 50S ribosomal subunit. Contacts protein L32.

The protein is Large ribosomal subunit protein bL17 of Roseobacter denitrificans (strain ATCC 33942 / OCh 114) (Erythrobacter sp. (strain OCh 114)).